A 452-amino-acid polypeptide reads, in one-letter code: Isocitrate dehydrogenase [NADP], mitochondrial (452 aa).

The transit peptide at 1–39 (MAGYLRVVRSLCRASGSRPAWAPAALTAPTSQEQTRRHY) directs the protein to the mitochondrion. N6-acetyllysine occurs at positions 45, 48, 67, and 69. N6-acetyllysine; alternate is present on residues K80 and K106. Residues K80 and K106 each carry the N6-succinyllysine; alternate modification. NADP(+)-binding positions include 115–117 (TIT) and R122. Substrate is bound at residue T117. Substrate is bound by residues 134-140 (SPNGTIR) and R149. The residue at position 155 (K155) is an N6-acetyllysine. The residue at position 166 (K166) is an N6-acetyllysine; alternate. K166 bears the N6-succinyllysine; alternate mark. R172 is a substrate binding site. 2 positions are modified to N6-acetyllysine; alternate: K180 and K193. 2 positions are modified to N6-succinyllysine; alternate: K180 and K193. K199 carries the N6-acetyllysine modification. At K256 the chain carries N6-acetyllysine; alternate. K256 carries the post-translational modification N6-succinyllysine; alternate. An N6-acetyllysine mark is found at K263, K272, K275, and K280. At K282 the chain carries N6-acetyllysine; alternate. K282 is modified (N6-succinyllysine; alternate). Residue D291 participates in Mn(2+) binding. K299 serves as a coordination point for NADP(+). Residue D314 participates in Mn(2+) binding. NADP(+) contacts are provided by residues 349 to 354 (GTVTRH) and N367. The residue at position 384 (K384) is an N6-acetyllysine; alternate. An N6-succinyllysine; alternate modification is found at K384. An N6-acetyllysine mark is found at K400, K413, and K442.

It belongs to the isocitrate and isopropylmalate dehydrogenases family. As to quaternary structure, homodimer. Mg(2+) serves as cofactor. The cofactor is Mn(2+). Acetylation at Lys-413 dramatically reduces catalytic activity. Deacetylated by SIRT3.

It is found in the mitochondrion. The enzyme catalyses D-threo-isocitrate + NADP(+) = 2-oxoglutarate + CO2 + NADPH. Plays a role in intermediary metabolism and energy production. It may tightly associate or interact with the pyruvate dehydrogenase complex. The chain is Isocitrate dehydrogenase [NADP], mitochondrial (IDH2) from Macaca fascicularis (Crab-eating macaque).